The chain runs to 207 residues: Abscisic acid receptor PYL4 (207 aa).

Residues 45 to 195 are START-like; it reads HEVGPNQCCS…NLQSLAKIAE (151 aa). Cysteine 52 and cysteine 176 are joined by a disulfide. Residues lysine 81, 111–116, 138–144, and glutamate 160 each bind abscisate; these read AASSTE and RLSNYRS. Residues 107-111 carry the Gate loop motif; that stretch reads SGLPA. A Latch loop motif is present at residues 137-139; sequence HRL.

Belongs to the PYR/PYL/RCAR abscisic acid intracellular receptor family. In terms of assembly, monomer. Homodimer. Binds ABA on one subunit only. Interacts with HAB1, ABI1 and ABI2, and possibly with other PP2Cs. Binds to CARs protein in an ABA-independent manner, both at the plasma membrane and in the nucleus. Interacts directly with CAR1 and CAR4. Interacts with TOPP1. Interacts with DDA1. Interacts with FREE1 (via N-terminus). Interacts with the E3 ubiquitin-protein ligase RSL1 at the plasma membrane. Post-translationally, ubiquitynated and degraded by the proteasome upon binding to the E3 ubiquitin-protein ligase RSL1 at the plasma membrane.

It is found in the cytoplasm. The protein localises to the nucleus. The protein resides in the cell membrane. Its subcellular location is the vacuole. In terms of biological role, receptor for abscisic acid (ABA) required for ABA-mediated responses such as stomatal closure and germination inhibition. Inhibits the activity of group-A protein phosphatases type 2C (PP2Cs) when activated by ABA. Can be activated by both (-)-ABA and (+)-ABA. This is Abscisic acid receptor PYL4 from Arabidopsis thaliana (Mouse-ear cress).